The following is a 302-amino-acid chain: tRNA dimethylallyltransferase 1 (302 aa).

Residue 6–13 coordinates ATP; the sequence is GPTACGKT. 8–13 is a substrate binding site; that stretch reads TACGKT. 2 interaction with substrate tRNA regions span residues 31 to 34 and 154 to 158; these read DSRQ and QRAIR.

Belongs to the IPP transferase family. As to quaternary structure, monomer. Requires Mg(2+) as cofactor.

The catalysed reaction is adenosine(37) in tRNA + dimethylallyl diphosphate = N(6)-dimethylallyladenosine(37) in tRNA + diphosphate. Functionally, catalyzes the transfer of a dimethylallyl group onto the adenine at position 37 in tRNAs that read codons beginning with uridine, leading to the formation of N6-(dimethylallyl)adenosine (i(6)A). The protein is tRNA dimethylallyltransferase 1 of Porphyromonas gingivalis (strain ATCC 33277 / DSM 20709 / CIP 103683 / JCM 12257 / NCTC 11834 / 2561).